The chain runs to 57 residues: Large ribosomal subunit protein bL32 (57 aa).

A disordered region spans residues 1-23; the sequence is MAVPKKKTSKSKRDKRRATWRHK.

Belongs to the bacterial ribosomal protein bL32 family.

This Nostoc sp. (strain PCC 7120 / SAG 25.82 / UTEX 2576) protein is Large ribosomal subunit protein bL32.